The primary structure comprises 106 residues: UPF0145 protein FTL_1249 (106 aa).

The protein belongs to the UPF0145 family.

This is UPF0145 protein FTL_1249 from Francisella tularensis subsp. holarctica (strain LVS).